The primary structure comprises 622 residues: Leucine-rich repeat-containing protein 70 (622 aa).

Positions 1–31 (MCGLQFSLPCLRLFLVVTCYLLLLLHKEILG) are cleaved as a signal peptide. The LRRNT domain maps to 32–60 (CSSVCQLCTGRQINCRNLGLSSIPKNFPE). LRR repeat units follow at residues 61 to 82 (STVF…ELTG), 85 to 106 (SLVA…AFVQ), 109 to 130 (HLYF…IFKG), 133 to 154 (NLRN…VFND), 157 to 178 (SVQY…TFVG), 181 to 202 (ALRI…GFQH), 205 to 226 (NLAC…AFEV), 229 to 250 (SLRR…AFKG), 253 to 274 (NLEY…GFSG), 277 to 298 (NLKH…TFSL), 301 to 322 (NLIY…TFEN), and 326 to 347 (SLKI…VLKP). A glycan (N-linked (GlcNAc...) asparagine) is linked at Asn-215. Asn-266 is a glycosylation site (N-linked (GlcNAc...) asparagine). Asn-331 and Asn-400 each carry an N-linked (GlcNAc...) asparagine glycan. An LRRCT domain is found at 359–406 (NPWECNCKLLGLRDWLASSAITLNIYCQNPPSMRGRALRYINITNCVT). Residues 527 to 547 (AFDILLAFFILACVLIIFLIY) traverse the membrane as a helical segment.

In terms of tissue distribution, expressed at low levels in many tissues, including smooth muscle, brain, uterus, pancreas, cartilage, adipose, spleen and testis.

Its subcellular location is the membrane. Renders cells highly sensitive to the activation by cytokines and lipopolysaccharide (LPS). The protein is Leucine-rich repeat-containing protein 70 (LRRC70) of Homo sapiens (Human).